The following is a 987-amino-acid chain: Sarcosine oxidase subunit alpha (987 aa).

Asp-198, Glu-199, Ser-206, Ala-244, and Gly-445 together coordinate NAD(+). Positions 714 and 806 each coordinate (6R)-5,10-methylene-5,6,7,8-tetrahydrofolate.

It belongs to the GcvT family. Heterotetramer composed of subunits alpha (SoxA), beta (SoxB), gamma (SoxG) and delta (SoxD). Requires NAD(+) as cofactor.

The protein localises to the cytoplasm. The catalysed reaction is sarcosine + (6S)-5,6,7,8-tetrahydrofolate + O2 = (6R)-5,10-methylene-5,6,7,8-tetrahydrofolate + glycine + H2O2. It catalyses the reaction sarcosine + O2 + H2O = formaldehyde + glycine + H2O2. In the presence of tetrahydrofolate, catalyzes the oxidative demethylation of sarcosine to yield glycine, 5,10-methylenetetrahydrofolate and hydrogen peroxide. In the absence of tetrahydrofolate, catalyzes the oxidative demethylation of sarcosine to yield glycine, formaldehyde and hydrogen peroxide. This chain is Sarcosine oxidase subunit alpha (soxA), found in Rhizobium meliloti (strain 1021) (Ensifer meliloti).